Consider the following 524-residue polypeptide: MPTVEELYRNYGILADATEQVGQHKDAYQVILDGVKGGTKEKRLAAQFIPKFFKHFPELADSAINAQLDLCEDEDVSIRRQAIKELPQFATGENLPRVADILTQLLQTDDSAEFNLVNNALLSIFKMDAKGTLGGLFSQILQGEDIVRERAIKFLSTKLKTLPDEVLTKEVEELILTESKKVLEDVTGEEFVLFMKILSGLKSLQTVSGRQQLVELVAEQADLEQTFNPSDPDCVDRLLQCTRQAVPLFSKNVHSTRFVTYFCEQVLPNLGTLTTPVEGLDIQLEVLKLLAEMSSFCGDMEKLETNLRKLFDKLLEYMPLPPEEAENGENAGNEEPKLQFSYVECLLYSFHQLGRKLPDFLTAKLNAEKLKDFKIRLQYFARGLQVYIRQLRLALQGKTGEALKTEENKIKVVALKITNNINVLIKDLFHIPPSYKSTVTLSWKPVQKVEIGQKRASEDTTSGSPPKKSSAGPKRDARQIYNPPSGKYSSNLGNFNYEQRGAFRGSRGGRGWGTRGNRSRGRLY.

Residues 2–360 form an ARM-like and Heat-like helical repeats region; the sequence is PTVEELYRNY…HQLGRKLPDF (359 aa). K251 is subject to N6-acetyllysine. Residues 370–391 form a leucine-zipper region; it reads LKDFKIRLQYFARGLQVYIRQL. Phosphothreonine is present on T399. The interval 452–524 is disordered; the sequence is GQKRASEDTT…RGNRSRGRLY (73 aa). The Nuclear localization signal signature appears at 454 to 475; it reads KRASEDTTSGSPPKKSSAGPKR. Phosphoserine occurs at positions 462, 464, and 469. Positions 462–472 are enriched in low complexity; it reads SGSPPKKSSAG. The span at 487-497 shows a compositional bias: polar residues; that stretch reads KYSSNLGNFNY. At R500 the chain carries Omega-N-methylarginine.

The protein belongs to the API5 family. In terms of assembly, monomer. Interacts with FGF2 and ACIN1. Acetylation at Lys-251 impairs antiapoptotic function. Expressed in all tissues tested, including heart, brain, placenta, lung, liver, skeletal muscle, kidney and pancreas. Highest levels in heart, pancreas and placenta. Highly expressed in several cancers. Preferentially expressed in squamous cell carcinoma versus adenocarcinoma in non-small cell lung cancer.

It is found in the nucleus. Its subcellular location is the cytoplasm. Functionally, antiapoptotic factor that may have a role in protein assembly. Negatively regulates ACIN1. By binding to ACIN1, it suppresses ACIN1 cleavage from CASP3 and ACIN1-mediated DNA fragmentation. Also known to efficiently suppress E2F1-induced apoptosis. Its depletion enhances the cytotoxic action of the chemotherapeutic drugs. The polypeptide is Apoptosis inhibitor 5 (Homo sapiens (Human)).